We begin with the raw amino-acid sequence, 234 residues long: Sugar fermentation stimulation protein homolog (234 aa).

The protein belongs to the SfsA family.

The polypeptide is Sugar fermentation stimulation protein homolog (Shewanella pealeana (strain ATCC 700345 / ANG-SQ1)).